We begin with the raw amino-acid sequence, 230 residues long: 7-cyano-7-deazaguanine synthase (230 aa).

Position 7–17 (C7–A17) interacts with ATP. Positions 185, 193, 196, and 199 each coordinate Zn(2+).

This sequence belongs to the QueC family. The cofactor is Zn(2+).

It catalyses the reaction 7-carboxy-7-deazaguanine + NH4(+) + ATP = 7-cyano-7-deazaguanine + ADP + phosphate + H2O + H(+). The protein operates within purine metabolism; 7-cyano-7-deazaguanine biosynthesis. Catalyzes the ATP-dependent conversion of 7-carboxy-7-deazaguanine (CDG) to 7-cyano-7-deazaguanine (preQ(0)). The sequence is that of 7-cyano-7-deazaguanine synthase from Ruegeria pomeroyi (strain ATCC 700808 / DSM 15171 / DSS-3) (Silicibacter pomeroyi).